The primary structure comprises 346 residues: Dihydroorotase (346 aa).

Zn(2+) contacts are provided by histidine 17 and histidine 19. Substrate contacts are provided by residues 19 to 21 (HVR) and asparagine 45. Zn(2+) is bound by residues lysine 102, histidine 139, and histidine 177. An N6-carboxylysine modification is found at lysine 102. Histidine 139 lines the substrate pocket. Leucine 222 is a substrate binding site. Aspartate 250 contributes to the Zn(2+) binding site. The active site involves aspartate 250. Substrate is bound by residues histidine 254 and alanine 266.

It belongs to the metallo-dependent hydrolases superfamily. DHOase family. Class II DHOase subfamily. In terms of assembly, homodimer. It depends on Zn(2+) as a cofactor.

It catalyses the reaction (S)-dihydroorotate + H2O = N-carbamoyl-L-aspartate + H(+). It functions in the pathway pyrimidine metabolism; UMP biosynthesis via de novo pathway; (S)-dihydroorotate from bicarbonate: step 3/3. Functionally, catalyzes the reversible cyclization of carbamoyl aspartate to dihydroorotate. In Delftia acidovorans (strain DSM 14801 / SPH-1), this protein is Dihydroorotase.